A 320-amino-acid chain; its full sequence is 3-O-acetylpapaveroxine carboxylesterase CXE1 (320 aa).

Residues 72–74 (HGG) carry the Involved in the stabilization of the negatively charged intermediate by the formation of the oxyanion hole motif. Active-site residues include Ser158, Asp262, and His292.

The protein belongs to the 'GDXG' lipolytic enzyme family.

It catalyses the reaction 3-O-acetylpapaveroxine + H2O = narcotine hemiacetal + acetate + H(+). It functions in the pathway alkaloid biosynthesis. Functionally, carboxylesterase involved in the biosynthesis of the benzylisoquinoline alkaloid noscapine. Converts 3-O-acetylpapaveroxine to papaveroxine which spontaneously rearranges to narcotine hemiacetal. In Papaver somniferum (Opium poppy), this protein is 3-O-acetylpapaveroxine carboxylesterase CXE1.